A 64-amino-acid chain; its full sequence is Probable cytochrome c oxidase subunit 5C-3 (64 aa).

The chain crosses the membrane as a helical span at residues 15–34 (SVVKELVIGLTLGLAAGGLW).

This sequence belongs to the cytochrome c oxidase subunit 5C family.

Its subcellular location is the mitochondrion inner membrane. Functionally, this protein is one of the nuclear-coded polypeptide chains of cytochrome c oxidase, the terminal oxidase in mitochondrial electron transport. The polypeptide is Probable cytochrome c oxidase subunit 5C-3 (Arabidopsis thaliana (Mouse-ear cress)).